Consider the following 194-residue polypeptide: Imidazoleglycerol-phosphate dehydratase (194 aa).

The protein belongs to the imidazoleglycerol-phosphate dehydratase family.

It is found in the cytoplasm. It catalyses the reaction D-erythro-1-(imidazol-4-yl)glycerol 3-phosphate = 3-(imidazol-4-yl)-2-oxopropyl phosphate + H2O. It participates in amino-acid biosynthesis; L-histidine biosynthesis; L-histidine from 5-phospho-alpha-D-ribose 1-diphosphate: step 6/9. The chain is Imidazoleglycerol-phosphate dehydratase from Bacillus velezensis (strain DSM 23117 / BGSC 10A6 / LMG 26770 / FZB42) (Bacillus amyloliquefaciens subsp. plantarum).